A 375-amino-acid polypeptide reads, in one-letter code: Probable protein-glutamate methylesterase BB_0415 (375 aa).

A Response regulatory domain is found at 6–120 (SVLIIEYFAV…SHEIKKEQII (115 aa)). The CheB-type methylesterase domain occupies 183–375 (KLRKFDIIAI…KLLKAILINS (193 aa)). Active-site residues include Ser-195, His-221, and Asp-317.

It catalyses the reaction [protein]-L-glutamate 5-O-methyl ester + H2O = L-glutamyl-[protein] + methanol + H(+). The sequence is that of Probable protein-glutamate methylesterase BB_0415 from Borreliella burgdorferi (strain ATCC 35210 / DSM 4680 / CIP 102532 / B31) (Borrelia burgdorferi).